A 303-amino-acid polypeptide reads, in one-letter code: Recombination-associated protein RdgC (303 aa).

Belongs to the RdgC family.

Its subcellular location is the cytoplasm. The protein localises to the nucleoid. Its function is as follows. May be involved in recombination. The polypeptide is Recombination-associated protein RdgC (Shewanella piezotolerans (strain WP3 / JCM 13877)).